The following is a 354-amino-acid chain: Guanine nucleotide-binding protein G(t) subunit alpha-3 (354 aa).

A disordered region spans residues 1–27 (MGSGISSESKESAKRSKELEKKLQEDA). The N-myristoyl glycine moiety is linked to residue Gly-2. The span at 8 to 27 (ESKESAKRSKELEKKLQEDA) shows a compositional bias: basic and acidic residues. The 323-residue stretch at 32 to 354 (RTVKLLLLGA…KENLKDCGLF (323 aa)) folds into the G-alpha domain. Residues 35–48 (KLLLLGAGESGKST) form a G1 motif region. GTP-binding positions include 40-47 (GAGESGKS), 175-181 (LHSRVKT), 200-204 (DVGGQ), 269-272 (NKKD), and Ala-326. Residues Ser-47 and Thr-181 each contribute to the Mg(2+) site. The segment at 173–181 (DVLHSRVKT) is G2 motif. Positions 196 to 205 (FRMFDVGGQR) are G3 motif. Positions 265–272 (VLFLNKKD) are G4 motif. Residues 324 to 329 (TCATDT) are G5 motif.

The protein belongs to the G-alpha family. G(i/o/t/z) subfamily. In terms of assembly, g proteins are composed of 3 units; alpha, beta and gamma, respectively GNAT3, GNB1 and GNG13 for Gustducin heterotrimer for bitter taste transduction. The alpha chain contains the guanine nucleotide binding site. Component of the TAS2R14-GNAT3 complex, consisting of TAS2R14, GNAT3, GNB1 and GNG2; within the complex interacts with TAS2R14; this complex plays a role in the perception of bitterness. Gustducin heterotrimer may also be composed of GNAT3, GNB3 and GNG13. Potential N-myristoylation may anchor alpha-subunit to the inner surface of plasma membrane. As to expression, expressed in taste buds (sensory organs of clustered epithelial cells) of the circumvallate, foliate and fungiform papillae of the tongue, as well as in nasoincisor, palatal and epiglottal taste buds at protein level. Expressed in enteroendocrine of the gut, in the lumenal pole of a subset of brush cells lining the stomach and the intestine at protein level. Detected in solitary cells throughout the respiratory track. Expressed also in spermatozoa.

It is found in the cytoplasm. In terms of biological role, guanine nucleotide-binding protein (G protein) alpha subunit playing a prominent role in bitter and sweet taste transduction as well as in umami (monosodium glutamate, monopotassium glutamate, and inosine monophosphate) taste transduction. Transduction by this alpha subunit involves coupling of specific cell-surface receptors with a cGMP-phosphodiesterase; Activation of phosphodiesterase lowers intracellular levels of cAMP and cGMP which may open a cyclic nucleotide-suppressible cation channel leading to influx of calcium, ultimately leading to release of neurotransmitter. Indeed, denatonium and strychnine induce transient reduction in cAMP and cGMP in taste tissue, whereas this decrease is inhibited by GNAT3 antibody. Gustducin heterotrimer transduces response to bitter and sweet compounds via regulation of phosphodiesterase for alpha subunit, as well as via activation of phospholipase C for beta and gamma subunits, with ultimate increase inositol trisphosphate and increase of intracellular Calcium. GNAT3 can functionally couple to taste receptors to transmit intracellular signal: receptor heterodimer TAS1R2/TAS1R3 senses sweetness and TAS1R1/TAS1R3 transduces umami taste, whereas the T2R family GPCRs act as bitter sensors. Also functions as lumenal sugar sensors in the gut to control the expression of the Na+-glucose transporter SGLT1 in response to dietaty sugar, as well as the secretion of Glucagon-like peptide-1, GLP-1 and glucose-dependent insulinotropic polypeptide, GIP. Thus, may modulate the gut capacity to absorb sugars, with implications for the prevention and treatment of malabsorption syndromes and diet-related disorders including diabetes and obesity. In Rattus norvegicus (Rat), this protein is Guanine nucleotide-binding protein G(t) subunit alpha-3 (Gnat3).